A 390-amino-acid chain; its full sequence is uncharacterized protein (390 aa).

This is an uncharacterized protein from Orgyia pseudotsugata multicapsid polyhedrosis virus (OpMNPV).